The following is a 94-amino-acid chain: Small ribosomal subunit protein bS16c (94 aa).

It belongs to the bacterial ribosomal protein bS16 family.

It is found in the plastid. Its subcellular location is the chloroplast. This chain is Small ribosomal subunit protein bS16c, found in Phalaenopsis aphrodite subsp. formosana (Moth orchid).